We begin with the raw amino-acid sequence, 278 residues long: Ribosomal RNA small subunit methyltransferase A (278 aa).

Positions 28, 30, 55, 77, 103, and 122 each coordinate S-adenosyl-L-methionine.

Belongs to the class I-like SAM-binding methyltransferase superfamily. rRNA adenine N(6)-methyltransferase family. RsmA subfamily.

It is found in the cytoplasm. The enzyme catalyses adenosine(1518)/adenosine(1519) in 16S rRNA + 4 S-adenosyl-L-methionine = N(6)-dimethyladenosine(1518)/N(6)-dimethyladenosine(1519) in 16S rRNA + 4 S-adenosyl-L-homocysteine + 4 H(+). Specifically dimethylates two adjacent adenosines (A1518 and A1519) in the loop of a conserved hairpin near the 3'-end of 16S rRNA in the 30S particle. May play a critical role in biogenesis of 30S subunits. In Cereibacter sphaeroides (strain ATCC 17025 / ATH 2.4.3) (Rhodobacter sphaeroides), this protein is Ribosomal RNA small subunit methyltransferase A.